The primary structure comprises 505 residues: Probable bifunctional methylthioribulose-1-phosphate dehydratase/enolase-phosphatase E1 (505 aa).

Positions 1–237 are methylthioribulose-1-phosphate dehydratase; the sequence is MGLDKDGISN…ALKLHQLGLD (237 aa). A substrate-binding site is contributed by Cys-109. Zn(2+) is bound by residues His-127 and His-129. Glu-152 serves as the catalytic Proton donor/acceptor; for methylthioribulose-1-phosphate dehydratase activity. Zn(2+) is bound at residue His-202. Residues 266–505 are enolase-phosphatase E1; the sequence is FVLDIEGTTT…FRTAKSLLEL (240 aa). Positions 269 and 271 each coordinate Mg(2+). Substrate-binding positions include 404 to 405 and Lys-438; that span reads SS. Residue Asp-464 coordinates Mg(2+).

The protein in the N-terminal section; belongs to the aldolase class II family. MtnB subfamily. This sequence in the C-terminal section; belongs to the HAD-like hydrolase superfamily. MasA/MtnC family. The cofactor is Zn(2+). Mg(2+) serves as cofactor.

The enzyme catalyses 5-(methylsulfanyl)-D-ribulose 1-phosphate = 5-methylsulfanyl-2,3-dioxopentyl phosphate + H2O. It carries out the reaction 5-methylsulfanyl-2,3-dioxopentyl phosphate + H2O = 1,2-dihydroxy-5-(methylsulfanyl)pent-1-en-3-one + phosphate. It participates in amino-acid biosynthesis; L-methionine biosynthesis via salvage pathway; L-methionine from S-methyl-5-thio-alpha-D-ribose 1-phosphate: step 2/6. It functions in the pathway amino-acid biosynthesis; L-methionine biosynthesis via salvage pathway; L-methionine from S-methyl-5-thio-alpha-D-ribose 1-phosphate: step 3/6. The protein operates within amino-acid biosynthesis; L-methionine biosynthesis via salvage pathway; L-methionine from S-methyl-5-thio-alpha-D-ribose 1-phosphate: step 4/6. The chain is Probable bifunctional methylthioribulose-1-phosphate dehydratase/enolase-phosphatase E1 from Physcomitrium patens (Spreading-leaved earth moss).